Consider the following 219-residue polypeptide: uncharacterized protein (219 aa).

A compositionally biased stretch (basic residues) spans 139–154 (PRKIKQKKKTKKKRPS). Residues 139–160 (PRKIKQKKKTKKKRPSKSAPKT) are disordered. A LysM domain is found at 159 to 217 (KTYTVKKGDTLWDLAGKFYGDSTKWRKIWKVNKKAMIKRSKRNIRQPGHWIFPGQKLKI).

This is an uncharacterized protein from Bacillus subtilis (strain 168).